Here is a 145-residue protein sequence, read N- to C-terminus: Lipoprotein signal peptidase (145 aa).

Transmembrane regions (helical) follow at residues 1–21, 57–77, and 79–99; these read MVYI…LLVM, YLFI…YYKT, and GSGM…GNLI. Active-site residues include Asp-109 and Asp-123. The chain crosses the membrane as a helical span at residues 115–135; it reads IWPVFNLADSSVVIGAALLIL.

It belongs to the peptidase A8 family.

Its subcellular location is the cell inner membrane. The enzyme catalyses Release of signal peptides from bacterial membrane prolipoproteins. Hydrolyzes -Xaa-Yaa-Zaa-|-(S,diacylglyceryl)Cys-, in which Xaa is hydrophobic (preferably Leu), and Yaa (Ala or Ser) and Zaa (Gly or Ala) have small, neutral side chains.. The protein operates within protein modification; lipoprotein biosynthesis (signal peptide cleavage). This protein specifically catalyzes the removal of signal peptides from prolipoproteins. In Halothermothrix orenii (strain H 168 / OCM 544 / DSM 9562), this protein is Lipoprotein signal peptidase.